The chain runs to 481 residues: Glutamyl-tRNA(Gln) amidotransferase subunit A (481 aa).

Catalysis depends on charge relay system residues Lys77 and Ser151. Ser175 acts as the Acyl-ester intermediate in catalysis.

Belongs to the amidase family. GatA subfamily. Heterotrimer of A, B and C subunits.

The catalysed reaction is L-glutamyl-tRNA(Gln) + L-glutamine + ATP + H2O = L-glutaminyl-tRNA(Gln) + L-glutamate + ADP + phosphate + H(+). Functionally, allows the formation of correctly charged Gln-tRNA(Gln) through the transamidation of misacylated Glu-tRNA(Gln) in organisms which lack glutaminyl-tRNA synthetase. The reaction takes place in the presence of glutamine and ATP through an activated gamma-phospho-Glu-tRNA(Gln). The polypeptide is Glutamyl-tRNA(Gln) amidotransferase subunit A (Rubrobacter xylanophilus (strain DSM 9941 / JCM 11954 / NBRC 16129 / PRD-1)).